The primary structure comprises 1572 residues: Dynein axonemal assembly factor 8 (1572 aa).

4 disordered regions span residues 1–21 (MASE…NWSG), 262–304 (SEEV…HPQS), 324–428 (SLEQ…EILQ), and 849–871 (FQNP…SDSE). Over residues 324–335 (SLEQNPENPSQR) the composition is skewed to polar residues. Positions 336 to 351 (NEQKEKHHLNKTDHTG) are enriched in basic and acidic residues. Residues 361–374 (NIQNDSLSDANMSN) show a composition bias toward polar residues. A compositionally biased stretch (basic and acidic residues) spans 409 to 426 (VGREEKDGREEQEKEKEI). The span at 849–865 (FQNPYSRSTQPRSANLR) shows a compositional bias: polar residues. The tract at residues 1249 to 1382 (TVLLLKPRIW…IRDIKTFFPE (134 aa)) is NDK.

As to quaternary structure, interacts with DNAI2. As to expression, expression is enriched in multiciliated cells in the epidermis and the nephrostomes of the pronephros.

It localises to the dynein axonemal particle. The protein localises to the cytoplasm. In cyliated cells, dynein axonemal particle-specific protein required for deployment of ODA to the axoneme. Interacts with outer dynein arm (ODA) subunits. In Xenopus laevis (African clawed frog), this protein is Dynein axonemal assembly factor 8 (dnaaf8).